A 162-amino-acid polypeptide reads, in one-letter code: Nucleotide-binding protein CMM_2802 (162 aa).

It belongs to the YajQ family.

Its function is as follows. Nucleotide-binding protein. The sequence is that of Nucleotide-binding protein CMM_2802 from Clavibacter michiganensis subsp. michiganensis (strain NCPPB 382).